The sequence spans 92 residues: DNA-binding protein HU (92 aa).

It belongs to the bacterial histone-like protein family. In terms of assembly, homodimer.

Histone-like DNA-binding protein which is capable of wrapping DNA to stabilize it, and thus to prevent its denaturation under extreme environmental conditions. This Buchnera aphidicola subsp. Acyrthosiphon pisum (strain APS) (Acyrthosiphon pisum symbiotic bacterium) protein is DNA-binding protein HU (hup).